Here is a 710-residue protein sequence, read N- to C-terminus: DNA ligase (710 aa).

NAD(+)-binding positions include 53–57 (DAEYD), 102–103 (SL), and glutamate 136. Lysine 138 functions as the N6-AMP-lysine intermediate in the catalytic mechanism. 4 residues coordinate NAD(+): arginine 159, glutamate 196, lysine 312, and lysine 336. Zn(2+) contacts are provided by cysteine 429, cysteine 432, cysteine 453, and cysteine 459. One can recognise a BRCT domain in the interval 633–710 (ETSSPVAGKT…DEDQWIELAG (78 aa)).

The protein belongs to the NAD-dependent DNA ligase family. LigA subfamily. The cofactor is Mg(2+). Mn(2+) is required as a cofactor.

It catalyses the reaction NAD(+) + (deoxyribonucleotide)n-3'-hydroxyl + 5'-phospho-(deoxyribonucleotide)m = (deoxyribonucleotide)n+m + AMP + beta-nicotinamide D-nucleotide.. Functionally, DNA ligase that catalyzes the formation of phosphodiester linkages between 5'-phosphoryl and 3'-hydroxyl groups in double-stranded DNA using NAD as a coenzyme and as the energy source for the reaction. It is essential for DNA replication and repair of damaged DNA. The sequence is that of DNA ligase from Parvibaculum lavamentivorans (strain DS-1 / DSM 13023 / NCIMB 13966).